Consider the following 908-residue polypeptide: Vacuolar membrane protease (908 aa).

Residues 1–25 (MTSGEEEEGTREQVPVSQPTGTTSI) are disordered. Over 1–48 (MTSGEEEEGTREQVPVSQPTGTTSIVSTKEKQPNIFIRAIRATFGYRK) the chain is Cytoplasmic. Positions 15–25 (PVSQPTGTTSI) are enriched in polar residues. Residues 49–69 (TSLTLFVLLTIFFTVAFSSYD) form a helical membrane-spanning segment. Residues 70 to 381 (NSLDFTIDLP…FSTSVTTLNT (312 aa)) lie on the Vacuolar side of the membrane. N143 and N162 each carry an N-linked (GlcNAc...) asparagine glycan. The Zn(2+) site is built by H176 and D188. Residue E221 is the Proton acceptor of the active site. Residues E222, E247, and H319 each coordinate Zn(2+). N354 carries an N-linked (GlcNAc...) asparagine glycan. A helical transmembrane segment spans residues 382–402 (INMVLIVLFPVLSGPLLFITV). Residues 403–411 (RYKKWNIGT) lie on the Cytoplasmic side of the membrane. Residues 412–432 (ANLFSLPLAIVITSLVGAVVV) traverse the membrane as a helical segment. Residues 433–449 (NQGFRLVNEFLPASRPM) are Vacuolar-facing. A helical membrane pass occupies residues 450-470 (LLVTTTTSILLLTYYILLNGI). Over 471–480 (NFVSPSGDQK) the chain is Cytoplasmic. The chain crosses the membrane as a helical span at residues 481–501 (LVSIIQISFIYWIALIFVTRG). Residues 502 to 514 (LSQNAIGDDHTGE) lie on the Vacuolar side of the membrane. The chain crosses the membrane as a helical span at residues 515–535 (FAFTILFLLEATASLFGLIGW). The Cytoplasmic segment spans residues 536–602 (TFTRSVKEPT…MQHFGYDWSL (67 aa)). The tract at residues 543-584 (EPTGDEEPLLNGRMERYVDGSDDEDDVEEEDDEDQSEEENHQ) is disordered. Residues 562–579 (GSDDEDDVEEEDDEDQSE) are compositionally biased toward acidic residues. Residues 603-623 (QFLLIVPISSLVIYNSGWLVI) traverse the membrane as a helical segment. Residues 624–638 (DGINKSIQESLVAEN) lie on the Vacuolar side of the membrane. Residue N627 is glycosylated (N-linked (GlcNAc...) asparagine). A helical transmembrane segment spans residues 639 to 659 (FIYLIIQLFSQFWILPILPFV). At 660–664 (YKLNR) the chain is on the cytoplasmic side. The chain crosses the membrane as a helical span at residues 665–685 (FMVLGLIAFALVGVTLISSVD). Over 686–908 (PFNQDNPLKL…LVSLTNRIEV (223 aa)) the chain is Vacuolar. Residues N752 and N764 are each glycosylated (N-linked (GlcNAc...) asparagine).

The protein belongs to the peptidase M28 family. Zn(2+) is required as a cofactor.

It localises to the vacuole membrane. Functionally, may be involved in vacuolar sorting and osmoregulation. The protein is Vacuolar membrane protease of Candida tropicalis (strain ATCC MYA-3404 / T1) (Yeast).